We begin with the raw amino-acid sequence, 377 residues long: Probable tRNA pseudouridine synthase D (377 aa).

Aspartate 89 serves as the catalytic Nucleophile. The region spanning 160–377 is the TRUD domain; sequence YLPAFIGYQR…ILRGDPRKFT (218 aa).

The protein belongs to the pseudouridine synthase TruD family.

It carries out the reaction uridine(13) in tRNA = pseudouridine(13) in tRNA. Its function is as follows. Could be responsible for synthesis of pseudouridine from uracil-13 in transfer RNAs. In Saccharolobus solfataricus (strain ATCC 35092 / DSM 1617 / JCM 11322 / P2) (Sulfolobus solfataricus), this protein is Probable tRNA pseudouridine synthase D.